A 420-amino-acid chain; its full sequence is Serine hydroxymethyltransferase (420 aa).

(6S)-5,6,7,8-tetrahydrofolate contacts are provided by residues L121 and 125 to 127 (GHL). Residue K229 is modified to N6-(pyridoxal phosphate)lysine.

Belongs to the SHMT family. In terms of assembly, homodimer. Pyridoxal 5'-phosphate serves as cofactor.

It localises to the cytoplasm. The catalysed reaction is (6R)-5,10-methylene-5,6,7,8-tetrahydrofolate + glycine + H2O = (6S)-5,6,7,8-tetrahydrofolate + L-serine. It participates in one-carbon metabolism; tetrahydrofolate interconversion. It functions in the pathway amino-acid biosynthesis; glycine biosynthesis; glycine from L-serine: step 1/1. In terms of biological role, catalyzes the reversible interconversion of serine and glycine with tetrahydrofolate (THF) serving as the one-carbon carrier. This reaction serves as the major source of one-carbon groups required for the biosynthesis of purines, thymidylate, methionine, and other important biomolecules. Also exhibits THF-independent aldolase activity toward beta-hydroxyamino acids, producing glycine and aldehydes, via a retro-aldol mechanism. The protein is Serine hydroxymethyltransferase of Pasteurella multocida (strain Pm70).